A 200-amino-acid polypeptide reads, in one-letter code: Dephospho-CoA kinase (200 aa).

The 197-residue stretch at 4–200 (VIGLTGGIAS…VILKNWNIID (197 aa)) folds into the DPCK domain. ATP is bound at residue 12–17 (ASGKST).

The protein belongs to the CoaE family.

The protein resides in the cytoplasm. It carries out the reaction 3'-dephospho-CoA + ATP = ADP + CoA + H(+). It participates in cofactor biosynthesis; coenzyme A biosynthesis; CoA from (R)-pantothenate: step 5/5. Functionally, catalyzes the phosphorylation of the 3'-hydroxyl group of dephosphocoenzyme A to form coenzyme A. The protein is Dephospho-CoA kinase of Bacillus cereus (strain ATCC 10987 / NRS 248).